Reading from the N-terminus, the 77-residue chain is Chassatide C2 (77 aa).

Residues 1-24 (MAKFANYLMLFLLVASLVMLEAQS) form the signal peptide. Positions 25–44 (SDTIKVPDLGKRLLMNRDPN) are cleaved as a propeptide — removed in mature form. The segment at residues 45 to 75 (GIPCAESCVWIPCTITALMGCSCKNNVCYNN) is a cross-link (cyclopeptide (Gly-Asn)). Disulfide bonds link cysteine 48–cysteine 65, cysteine 52–cysteine 67, and cysteine 57–cysteine 72. Methionine 63 is subject to Methionine sulfoxide; in form chassatide chaC2A. Positions 76-77 (EL) are cleaved as a propeptide — removed in mature form.

Belongs to the cyclotide family. Bracelet subfamily. Post-translationally, this is a cyclic peptide. As to expression, expressed in fruit, pedicel and stem but not in leaf and root (at protein level).

Its function is as follows. Chassatide C2: Probably participates in a plant defense mechanism. Has no activity against bacteria up to a concentration of 80 uM. Has cytotoxic but no hemolytic activity. In terms of biological role, chassatide C2A: Probably participates in a plant defense mechanism. Has no activity against bacteria up to a concentration of 80 uM. Has no cytotoxic and no hemolytic activity. The protein is Chassatide C2 of Chassalia chartacea (Chassalia curviflora).